An 86-amino-acid polypeptide reads, in one-letter code: Large ribosomal subunit protein bL27 (86 aa).

This sequence belongs to the bacterial ribosomal protein bL27 family.

The sequence is that of Large ribosomal subunit protein bL27 from Cupriavidus metallidurans (strain ATCC 43123 / DSM 2839 / NBRC 102507 / CH34) (Ralstonia metallidurans).